A 1117-amino-acid chain; its full sequence is Protein rliB (1117 aa).

The first 23 residues, Met1 to Ser23, serve as a signal peptide directing secretion. N-linked (GlcNAc...) asparagine glycans are attached at residues Asn136, Asn195, Asn279, and Asn318. Positions Ser266–Ser392 constitute a G8 domain. PbH1 repeat units lie at residues Val522–Gly544 and Thr545–Asp567. Residues Asn547 and Asn605 are each glycosylated (N-linked (GlcNAc...) asparagine). One copy of the PbH1 3 repeat lies at Asn621–Asn642. Residues Asn728, Asn845, Asn1030, Asn1044, Asn1091, and Asn1107 are each glycosylated (N-linked (GlcNAc...) asparagine).

It belongs to the comF family.

It localises to the secreted. The sequence is that of Protein rliB (rliB) from Dictyostelium discoideum (Social amoeba).